Consider the following 356-residue polypeptide: GTPase Obg (356 aa).

The Obg domain occupies 1–159 (MKFLDEAKVY…RWIWLRMKLI (159 aa)). An OBG-type G domain is found at 160-327 (ADAGLVGLPN…VLRALTDVIS (168 aa)). GTP is bound by residues 166–173 (GLPNAGKS), 191–195 (FTTLH), 212–215 (DIPG), 279–282 (NKID), and 308–310 (SGV). 2 residues coordinate Mg(2+): S173 and T193. Residues 329–356 (APVSTKAKGEPTENETPPPSTGWSPLSN) form a disordered region.

This sequence belongs to the TRAFAC class OBG-HflX-like GTPase superfamily. OBG GTPase family. Monomer. It depends on Mg(2+) as a cofactor.

It localises to the cytoplasm. Its function is as follows. An essential GTPase which binds GTP, GDP and possibly (p)ppGpp with moderate affinity, with high nucleotide exchange rates and a fairly low GTP hydrolysis rate. Plays a role in control of the cell cycle, stress response, ribosome biogenesis and in those bacteria that undergo differentiation, in morphogenesis control. This is GTPase Obg from Afipia carboxidovorans (strain ATCC 49405 / DSM 1227 / KCTC 32145 / OM5) (Oligotropha carboxidovorans).